Reading from the N-terminus, the 215-residue chain is 7-methyl-GTP pyrophosphatase (215 aa).

Aspartate 79 serves as the catalytic Proton acceptor.

The protein belongs to the Maf family. YceF subfamily. A divalent metal cation is required as a cofactor.

The protein resides in the cytoplasm. The enzyme catalyses N(7)-methyl-GTP + H2O = N(7)-methyl-GMP + diphosphate + H(+). Nucleoside triphosphate pyrophosphatase that hydrolyzes 7-methyl-GTP (m(7)GTP). May have a dual role in cell division arrest and in preventing the incorporation of modified nucleotides into cellular nucleic acids. The chain is 7-methyl-GTP pyrophosphatase from Burkholderia thailandensis (strain ATCC 700388 / DSM 13276 / CCUG 48851 / CIP 106301 / E264).